Here is a 138-residue protein sequence, read N- to C-terminus: MAKYIPKTGSRKNVRIGSRNHTRKIPKGIIHVQASFNNTIVTITDVRGRVISWSSAGTCGFKGTRRGTPFAAQTAAGNAIRTVSDQGMQRAEIMIKGPGLGRDAALRAIRRSGILLNFIRDVTPMPHNGCRSPKKRRV.

Belongs to the universal ribosomal protein uS11 family. In terms of assembly, part of the 30S ribosomal subunit.

Its subcellular location is the plastid. The protein localises to the chloroplast. This chain is Small ribosomal subunit protein uS11c, found in Phaseolus vulgaris (Kidney bean).